The following is a 311-amino-acid chain: 4-hydroxy-tetrahydrodipicolinate synthase (311 aa).

Pyruvate is bound at residue Thr-51. The active-site Proton donor/acceptor is the Tyr-140. Lys-168 functions as the Schiff-base intermediate with substrate in the catalytic mechanism. A pyruvate-binding site is contributed by Ile-209.

The protein belongs to the DapA family. In terms of assembly, homotetramer; dimer of dimers.

Its subcellular location is the cytoplasm. The catalysed reaction is L-aspartate 4-semialdehyde + pyruvate = (2S,4S)-4-hydroxy-2,3,4,5-tetrahydrodipicolinate + H2O + H(+). The protein operates within amino-acid biosynthesis; L-lysine biosynthesis via DAP pathway; (S)-tetrahydrodipicolinate from L-aspartate: step 3/4. In terms of biological role, catalyzes the condensation of (S)-aspartate-beta-semialdehyde [(S)-ASA] and pyruvate to 4-hydroxy-tetrahydrodipicolinate (HTPA). This chain is 4-hydroxy-tetrahydrodipicolinate synthase, found in Streptococcus pneumoniae (strain ATCC BAA-255 / R6).